The chain runs to 222 residues: Superoxide dismutase [Mn], mitochondrial (222 aa).

Residues 1–24 constitute a mitochondrion transit peptide; sequence MLCRAACSTSRKLVPALGSLGSRQ. H50 provides a ligand contact to Mn(2+). Y58 is modified (3'-nitrotyrosine). Residues K68 and K75 each carry the N6-acetyllysine; alternate modification. 2 positions are modified to N6-succinyllysine; alternate: K68 and K75. Position 98 (H98) interacts with Mn(2+). At K114 the chain carries N6-acetyllysine. N6-acetyllysine; alternate is present on residues K122 and K130. 2 positions are modified to N6-succinyllysine; alternate: K122 and K130. Positions 183 and 187 each coordinate Mn(2+). At K202 the chain carries N6-acetyllysine.

This sequence belongs to the iron/manganese superoxide dismutase family. In terms of assembly, homotetramer. Mn(2+) is required as a cofactor. In terms of processing, nitrated under oxidative stress. Nitration coupled with oxidation inhibits the catalytic activity. Post-translationally, acetylation at Lys-122 decreases enzymatic activity. Deacetylated by SIRT3 upon exposure to ionizing radiations or after long fasting. Polyubiquitinated; leading to proteasomal degradation. Deubiquitinated by USP36 which increases protein stability.

The protein localises to the mitochondrion matrix. It catalyses the reaction 2 superoxide + 2 H(+) = H2O2 + O2. Its function is as follows. Destroys superoxide anion radicals which are normally produced within the cells and which are toxic to biological systems. The chain is Superoxide dismutase [Mn], mitochondrial (SOD2) from Equus caballus (Horse).